The following is a 468-amino-acid chain: Putrescine aminotransferase (468 aa).

Residues 150–151 (GT) and Gln274 each bind pyridoxal 5'-phosphate. Lys300 is subject to N6-(pyridoxal phosphate)lysine. Thr332 is a pyridoxal 5'-phosphate binding site.

This sequence belongs to the class-III pyridoxal-phosphate-dependent aminotransferase family. Putrescine aminotransferase subfamily. Pyridoxal 5'-phosphate serves as cofactor.

It catalyses the reaction an alkane-alpha,omega-diamine + 2-oxoglutarate = an omega-aminoaldehyde + L-glutamate. It carries out the reaction putrescine + 2-oxoglutarate = 1-pyrroline + L-glutamate + H2O. The enzyme catalyses cadaverine + 2-oxoglutarate = 5-aminopentanal + L-glutamate. Its pathway is amine and polyamine degradation; putrescine degradation; 4-aminobutanal from putrescine (transaminase route): step 1/1. In terms of biological role, catalyzes the aminotransferase reaction from putrescine to 2-oxoglutarate, leading to glutamate and 4-aminobutanal, which spontaneously cyclizes to form 1-pyrroline. This is the first step in one of two pathways for putrescine degradation, where putrescine is converted into 4-aminobutanoate (gamma-aminobutyrate or GABA) via 4-aminobutanal. Also functions as a cadaverine transaminase in a a L-lysine degradation pathway to succinate that proceeds via cadaverine, glutarate and L-2-hydroxyglutarate. The chain is Putrescine aminotransferase from Pectobacterium atrosepticum (strain SCRI 1043 / ATCC BAA-672) (Erwinia carotovora subsp. atroseptica).